We begin with the raw amino-acid sequence, 497 residues long: Envelope glycoprotein E (497 aa).

Residues 1–398 (MCVFQILIIV…GTIIYDILLT (398 aa)) are Virion surface-facing. Asn60, Asn133, Asn148, Asn203, Asn277, Asn366, and Asn388 each carry an N-linked (GlcNAc...) asparagine; by host glycan. The helical transmembrane segment at 399-419 (SLSIGAIIIVIVGGVCIAILI) threads the bilayer. The Intravirion segment spans residues 420-497 (RRRRRRRTRG…KIRKRLDLYH (78 aa)).

This sequence belongs to the alphaherpesvirinae glycoprotein E family. In terms of assembly, interacts with gI. Phosphorylated within the acidic cluster. Phosphorylation determines whether endocytosed viral gE traffics to the trans-Golgi network or recycles to the cell membrane.

The protein resides in the virion membrane. The protein localises to the host cell membrane. It is found in the host cell junction. Its subcellular location is the host Golgi apparatus membrane. It localises to the host endosome membrane. Functionally, in epithelial cells, the heterodimer gE/gI is required for the cell-to-cell spread of the virus, by sorting nascent virions to cell junctions. Once the virus reaches the cell junctions, virus particles can spread to adjacent cells extremely rapidly through interactions with cellular receptors that accumulate at these junctions. Implicated in basolateral spread in polarized cells. In neuronal cells, gE/gI is essential for the anterograde spread of the infection throughout the host nervous system. Together with US9, the heterodimer gE/gI is involved in the sorting and transport of viral structural components toward axon tips. In Gallus gallus (Chicken), this protein is Envelope glycoprotein E (MDV096).